The primary structure comprises 247 residues: Cell division protein ZapD (247 aa).

This sequence belongs to the ZapD family. As to quaternary structure, interacts with FtsZ.

It is found in the cytoplasm. Functionally, cell division factor that enhances FtsZ-ring assembly. Directly interacts with FtsZ and promotes bundling of FtsZ protofilaments, with a reduction in FtsZ GTPase activity. The chain is Cell division protein ZapD from Escherichia coli O157:H7.